A 169-amino-acid chain; its full sequence is Crossover junction endodeoxyribonuclease RuvC (169 aa).

Catalysis depends on residues Asp11, Glu71, and His143. Residues Asp11, Glu71, and His143 each contribute to the Mg(2+) site.

This sequence belongs to the RuvC family. Homodimer which binds Holliday junction (HJ) DNA. The HJ becomes 2-fold symmetrical on binding to RuvC with unstacked arms; it has a different conformation from HJ DNA in complex with RuvA. In the full resolvosome a probable DNA-RuvA(4)-RuvB(12)-RuvC(2) complex forms which resolves the HJ. It depends on Mg(2+) as a cofactor.

It is found in the cytoplasm. It carries out the reaction Endonucleolytic cleavage at a junction such as a reciprocal single-stranded crossover between two homologous DNA duplexes (Holliday junction).. The RuvA-RuvB-RuvC complex processes Holliday junction (HJ) DNA during genetic recombination and DNA repair. Endonuclease that resolves HJ intermediates. Cleaves cruciform DNA by making single-stranded nicks across the HJ at symmetrical positions within the homologous arms, yielding a 5'-phosphate and a 3'-hydroxyl group; requires a central core of homology in the junction. The consensus cleavage sequence is 5'-(A/T)TT(C/G)-3'. Cleavage occurs on the 3'-side of the TT dinucleotide at the point of strand exchange. HJ branch migration catalyzed by RuvA-RuvB allows RuvC to scan DNA until it finds its consensus sequence, where it cleaves and resolves the cruciform DNA. The sequence is that of Crossover junction endodeoxyribonuclease RuvC from Mesorhizobium japonicum (strain LMG 29417 / CECT 9101 / MAFF 303099) (Mesorhizobium loti (strain MAFF 303099)).